Here is a 274-residue protein sequence, read N- to C-terminus: uncharacterized protein (274 aa).

Residue 104-111 (GVFAIGKS) coordinates ATP.

This is an uncharacterized protein from Mycoplasma genitalium (strain ATCC 33530 / DSM 19775 / NCTC 10195 / G37) (Mycoplasmoides genitalium).